The sequence spans 869 residues: Aconitate hydratase B (869 aa).

Substrate is bound by residues Arg-191, 244-246 (SSR), 417-419 (QDT), and Ser-501. [4Fe-4S] cluster is bound by residues Cys-713, Cys-772, and Cys-775. Substrate contacts are provided by Arg-794 and Arg-799.

It belongs to the aconitase/IPM isomerase family. As to quaternary structure, monomer. It depends on [4Fe-4S] cluster as a cofactor.

The catalysed reaction is citrate = D-threo-isocitrate. It catalyses the reaction (2S,3R)-3-hydroxybutane-1,2,3-tricarboxylate = 2-methyl-cis-aconitate + H2O. It participates in carbohydrate metabolism; tricarboxylic acid cycle; isocitrate from oxaloacetate: step 2/2. The protein operates within organic acid metabolism; propanoate degradation. In terms of biological role, involved in the catabolism of short chain fatty acids (SCFA) via the tricarboxylic acid (TCA)(acetyl degradation route) and probably via the 2-methylcitrate cycle I (propionate degradation route). Catalyzes the reversible isomerization of citrate to isocitrate via cis-aconitate. Catalyzes the hydration of 2-methyl-cis-aconitate to yield (2R,3S)-2-methylisocitrate. The apo form of AcnB functions as a RNA-binding regulatory protein. The chain is Aconitate hydratase B (acnB) from Pseudomonas aeruginosa (strain ATCC 15692 / DSM 22644 / CIP 104116 / JCM 14847 / LMG 12228 / 1C / PRS 101 / PAO1).